The sequence spans 562 residues: AT-rich interactive domain-containing protein 1 (562 aa).

The ARID domain occupies 43–136 (KELISLFRPL…YLDAFGRWLN (94 aa)). An ELM2 domain is found at 358–448 (PCALVGSKFQ…KLELGPAFYM (91 aa)).

It localises to the nucleus. The chain is AT-rich interactive domain-containing protein 1 (ARID1) from Arabidopsis thaliana (Mouse-ear cress).